The following is a 274-amino-acid chain: Lipoprotein E (274 aa).

Positions 1-20 (MKTTLKMTALAALSAFVLAG) are cleaved as a signal peptide. Cys-21 is lipidated: N-palmitoyl cysteine. Cys-21 carries S-diacylglycerol cysteine lipidation.

Its subcellular location is the cell outer membrane. This is Lipoprotein E (hel) from Haemophilus influenzae (strain ATCC 51907 / DSM 11121 / KW20 / Rd).